Here is a 245-residue protein sequence, read N- to C-terminus: tRNA (guanine-N(1)-)-methyltransferase (245 aa).

Residues Gly-111 and 131-136 (IGDYVL) contribute to the S-adenosyl-L-methionine site.

Belongs to the RNA methyltransferase TrmD family. As to quaternary structure, homodimer.

The protein resides in the cytoplasm. It catalyses the reaction guanosine(37) in tRNA + S-adenosyl-L-methionine = N(1)-methylguanosine(37) in tRNA + S-adenosyl-L-homocysteine + H(+). Functionally, specifically methylates guanosine-37 in various tRNAs. The sequence is that of tRNA (guanine-N(1)-)-methyltransferase from Caldicellulosiruptor saccharolyticus (strain ATCC 43494 / DSM 8903 / Tp8T 6331).